A 274-amino-acid chain; its full sequence is Ribosomal RNA small subunit methyltransferase A (274 aa).

Residues His15, Leu17, Gly42, Glu64, Asp89, and Asn108 each coordinate S-adenosyl-L-methionine.

Belongs to the class I-like SAM-binding methyltransferase superfamily. rRNA adenine N(6)-methyltransferase family. RsmA subfamily.

The protein localises to the cytoplasm. The catalysed reaction is adenosine(1518)/adenosine(1519) in 16S rRNA + 4 S-adenosyl-L-methionine = N(6)-dimethyladenosine(1518)/N(6)-dimethyladenosine(1519) in 16S rRNA + 4 S-adenosyl-L-homocysteine + 4 H(+). Its function is as follows. Specifically dimethylates two adjacent adenosines (A1518 and A1519) in the loop of a conserved hairpin near the 3'-end of 16S rRNA in the 30S particle. May play a critical role in biogenesis of 30S subunits. The sequence is that of Ribosomal RNA small subunit methyltransferase A from Prochlorococcus marinus (strain AS9601).